The following is a 263-amino-acid chain: Killer cell lectin-like receptor 4 (263 aa).

Residues 1–44 (MTEQEDTFSAVRFHKSSGLQNEMRLKETRKPEKARLRVCSVPWQ) lie on the Cytoplasmic side of the membrane. The chain crosses the membrane as a helical; Signal-anchor for type II membrane protein span at residues 45 to 65 (LIVIALGILISLRLVTVAVLM). Over 66 to 263 (TNIFQYGQQK…CGKRLDKFPH (198 aa)) the chain is Extracellular. Residues N87 and N104 are each glycosylated (N-linked (GlcNAc...) asparagine). Residues 139–258 (GVKVYWFCYG…SFICICGKRL (120 aa)) form the C-type lectin domain. 4 cysteine pairs are disulfide-bonded: C146–C151, C164–C252, C168–C254, and C233–C246. N-linked (GlcNAc...) asparagine glycans are attached at residues N170 and N222.

Homodimer; disulfide-linked. Interacts with the adapter protein TYROBP/DAP12; the interaction leads to natural killer cell activation.

The protein localises to the cell membrane. Receptor on natural killer (NK) cells for class I MHC. The sequence is that of Killer cell lectin-like receptor 4 (Klra4) from Mus musculus (Mouse).